The chain runs to 254 residues: Thiazole synthase (254 aa).

Lysine 95 serves as the catalytic Schiff-base intermediate with DXP. Residues glycine 156, 182-183 (AG), and 204-205 (NT) each bind 1-deoxy-D-xylulose 5-phosphate.

The protein belongs to the ThiG family. Homotetramer. Forms heterodimers with either ThiH or ThiS.

It is found in the cytoplasm. It carries out the reaction [ThiS sulfur-carrier protein]-C-terminal-Gly-aminoethanethioate + 2-iminoacetate + 1-deoxy-D-xylulose 5-phosphate = [ThiS sulfur-carrier protein]-C-terminal Gly-Gly + 2-[(2R,5Z)-2-carboxy-4-methylthiazol-5(2H)-ylidene]ethyl phosphate + 2 H2O + H(+). It functions in the pathway cofactor biosynthesis; thiamine diphosphate biosynthesis. In terms of biological role, catalyzes the rearrangement of 1-deoxy-D-xylulose 5-phosphate (DXP) to produce the thiazole phosphate moiety of thiamine. Sulfur is provided by the thiocarboxylate moiety of the carrier protein ThiS. In vitro, sulfur can be provided by H(2)S. This Shewanella piezotolerans (strain WP3 / JCM 13877) protein is Thiazole synthase.